Here is an 82-residue protein sequence, read N- to C-terminus: Conotoxin C11GB (82 aa).

Residues 1-22 (MKLTCVMIVAVLFLTAWTVVTA) form the signal peptide. Positions 23-53 (EPHSSNVLENLYLKAHHEMENPEASKLNTRD) are excised as a propeptide. 3 disulfides stabilise this stretch: cysteine 55/cysteine 72, cysteine 62/cysteine 76, and cysteine 71/cysteine 80.

It belongs to the conotoxin O1 superfamily. Expressed by the venom duct.

The protein localises to the secreted. The sequence is that of Conotoxin C11GB from Conus vexillum (Flag cone).